We begin with the raw amino-acid sequence, 223 residues long: Deoxyribose-phosphate aldolase (223 aa).

The active-site Proton donor/acceptor is D89. K154 acts as the Schiff-base intermediate with acetaldehyde in catalysis. The Proton donor/acceptor role is filled by K183.

Belongs to the DeoC/FbaB aldolase family. DeoC type 1 subfamily.

Its subcellular location is the cytoplasm. It catalyses the reaction 2-deoxy-D-ribose 5-phosphate = D-glyceraldehyde 3-phosphate + acetaldehyde. It functions in the pathway carbohydrate degradation; 2-deoxy-D-ribose 1-phosphate degradation; D-glyceraldehyde 3-phosphate and acetaldehyde from 2-deoxy-alpha-D-ribose 1-phosphate: step 2/2. Its function is as follows. Catalyzes a reversible aldol reaction between acetaldehyde and D-glyceraldehyde 3-phosphate to generate 2-deoxy-D-ribose 5-phosphate. This is Deoxyribose-phosphate aldolase from Thermoanaerobacter pseudethanolicus (strain ATCC 33223 / 39E) (Clostridium thermohydrosulfuricum).